A 420-amino-acid polypeptide reads, in one-letter code: Glucose-1-phosphate adenylyltransferase (420 aa).

Residues Y107, G172, 187 to 188 (EK), and S205 contribute to the alpha-D-glucose 1-phosphate site.

It belongs to the bacterial/plant glucose-1-phosphate adenylyltransferase family. In terms of assembly, homotetramer.

It carries out the reaction alpha-D-glucose 1-phosphate + ATP + H(+) = ADP-alpha-D-glucose + diphosphate. Its pathway is glycan biosynthesis; glycogen biosynthesis. Functionally, involved in the biosynthesis of ADP-glucose, a building block required for the elongation reactions to produce glycogen. Catalyzes the reaction between ATP and alpha-D-glucose 1-phosphate (G1P) to produce pyrophosphate and ADP-Glc. The polypeptide is Glucose-1-phosphate adenylyltransferase (Rhodopseudomonas palustris (strain TIE-1)).